The primary structure comprises 244 residues: tRNA (guanine-N(1)-)-methyltransferase (244 aa).

Residues Gly-113 and 133–138 each bind S-adenosyl-L-methionine; that span reads IGDYVL.

It belongs to the RNA methyltransferase TrmD family. In terms of assembly, homodimer.

It localises to the cytoplasm. The catalysed reaction is guanosine(37) in tRNA + S-adenosyl-L-methionine = N(1)-methylguanosine(37) in tRNA + S-adenosyl-L-homocysteine + H(+). Its function is as follows. Specifically methylates guanosine-37 in various tRNAs. The polypeptide is tRNA (guanine-N(1)-)-methyltransferase (Bacillus cereus (strain G9842)).